The chain runs to 322 residues: MAAPPSPGRTADQADQVCTFLFKKPGRKGAAGLRKRPACDPEHGESSSSGDEGDTVAQPPRVAPRPRGLHSWQKAAHGDRRGEEAAPESLDVVYRSTRSAKPVGPEDMGATADFEQDTEKEHHTPTILKCSQRVQEALRGREHDHIYRGIHSYLRYLKPKDTSMGNSSSGMARKGPIRAPGHLRATVRWDYQPDICKDYKETGFCGFGDSCKFLHDRSDYKLGWEIERELEEGRYCICEDENHEVGSEEEEIPFRCFICRQAFQNPVVTKCRHYFCESCALEHFRATPRCYICDQPTGGIFNPAKELMAKLQKLQAAEGKKR.

Residues 24–92 (KPGRKGAAGL…EEAAPESLDV (69 aa)) form a disordered region. Residues 46 to 60 (SSSSGDEGDTVAQPP) are compositionally biased toward low complexity. A C3H1-type zinc finger spans residues 190–218 (DYQPDICKDYKETGFCGFGDSCKFLHDRS). The segment at 256–294 (CFICRQAFQNPVVTKCRHYFCESCALEHFRATPRCYICD) adopts an RING-type zinc-finger fold.

This is RING finger protein 113B (RNF113B) from Homo sapiens (Human).